Consider the following 872-residue polypeptide: MEEVLETMQLENMHCDVCEGTTFQEREGFYYCVECGTQKDQIRAVDITAEDNFDDTAAGRYTARTIRQKKDTEKEDEDDITSWEFYNYVLRGFLQELLNMGAKPELKLMTLQVWAAYLDSMEVAFSKSNKTGLPKLNVRALPIDARIIYNHKTFKKGKKGKKSTLTGDPNDERAKFRLWNRTKRNLDASGYRSHGGASESEGEQSLHLQWSMRARKSLKRHMPLKHLDKHSRDSKGSMSCHSLRPRVKQLHNFDRNIYCLNIIKLYVVLGIALNMVEDDIQLSDLLRFIDEEHLTKRCMLNYLPGNVAAKGKALLKDMELSKMKDKVTNKLLRVNIACMSRFINLSEYQKPNLHSLAERYILELALPPRLLKYVNSLLDLHPPTFFNAMTVHPYPRYEARTMAYILYAMKLLFGLDDLKERNISESAAKINEKLLEVGGDEAPLLFVFTEWMEFVEMRKVIVSHYNQSFARRFGVSTRTGCQVDDILAKEWKEKEQGETFGWMQGSAAMKRQHENLTHIIETMLKDHFGESSKESMEKEHIEFQPSLTPAHSYFNRILLQVSRSDGAKMKITIPDHMKVDHSARNLDPFVLETTELSQYLSQHGLKLRVEELACQEDIQNVGIFRPLTIIRGDGREYRANTEIKTETWISELKRKEKRPDFRFTQPTGTYGARYLKRITMRDARRVQLEINNPFWDVTETPSFLLKLNDNEIPLDSLSSLQTFEEGTMDPLNIPLDLPRRNLEKILNPEGSDRASDQVASDINDEPPSPETLLLQVSNFDCWLLHGYMKRIRRHDKHELRQLFPCSFRWLLETCASTIGIVWEELYEELLIVEVMYHHSIRDWSNHRNYLCIQHNTQEKDIRTLARTYKELW.

An RRN7-type zinc finger spans residues 6–40 (ETMQLENMHCDVCEGTTFQEREGFYYCVECGTQKD). C15, C18, C32, and C35 together coordinate Zn(2+). Residues 41-72 (QIRAVDITAEDNFDDTAAGRYTARTIRQKKDT) are B-reader. Residues 73 to 84 (EKEDEDDITSWE) form a B-linker region. Positions 85–312 (FYNYVLRGFL…LPGNVAAKGK (228 aa)) are N-terminal cyclin fold. The tract at residues 187–206 (DASGYRSHGGASESEGEQSL) is disordered.

The protein belongs to the RRN7/TAF1B family.

It is found in the nucleus. Its subcellular location is the nucleolus. Its function is as follows. Component of RNA polymerase I core factor complex that acts as a GTF2B/TFIIB-like factor and plays a key role in multiple steps during transcription initiation such as pre-initiation complex (PIC) assembly and postpolymerase recruitment events in polymerase I (Pol I) transcription. Binds rDNA promoters and plays a role in Pol I recruitment. The polypeptide is TATA box-binding protein-associated factor RNA polymerase I subunit B (Drosophila melanogaster (Fruit fly)).